Consider the following 384-residue polypeptide: Transcriptional regulator of the unfolded protein response hacA (384 aa).

Residues 1–18 (MTESTFAVETFSMDSMSP) show a composition bias toward polar residues. 2 disordered regions span residues 1-27 (MTESTFAVETFSMDSMSPSPGAEIPRL) and 41-94 (LVPE…QRRI). Basic and acidic residues predominate over residues 84–94 (KTEDEKEQRRI). The bZIP domain occupies 90–153 (EQRRIERVLR…NRLSQQVAKL (64 aa)). Residues 92–101 (RRIERVLRNR) form a basic motif region. Positions 106–113 (ISRERKRL) are leucine-zipper. 2 disordered regions span residues 208–256 (SIPF…PSDL) and 331–384 (PDED…AGAQ). The span at 218–240 (STTTTTTTTTTTSNNISSTSSTT) shows a compositional bias: low complexity.

The protein belongs to the bZIP family.

It localises to the nucleus. Its function is as follows. Master transcriptional regulator of the unfolded protein response (UPR) that recognizes and binds to the UPR element (UPRE) in the promoter of UPR-regulated genes. Exposure to antifungals and ER-stressing agents initiates the activation of hacA which occurs when a 20 nucleotide fragment is removed from part of the exon-2 and part of intron-2, which in turn promotes the arisen of the DNA binding site motif and a dimer interface domain. Modulates the expression of genes related to cell wall synthesis, ergosterol biosynthesis, pigmentation, heat shock proteins, and the genes coding for mannosyltransferase enzymes. Plays a key role in both response to stress and host-pathogen interaction. This chain is Transcriptional regulator of the unfolded protein response hacA, found in Trichophyton rubrum (strain ATCC MYA-4607 / CBS 118892) (Athlete's foot fungus).